An 86-amino-acid polypeptide reads, in one-letter code: F(1)-ATPase inhibitor STF1, mitochondrial (86 aa).

Residues 1–23 (MLNRCISRNTRLPVNLRIASRFY) constitute a mitochondrion transit peptide. The residue at position 24 (Ser24) is a Phosphoserine.

Belongs to the ATPase inhibitor family. In terms of assembly, monomer and homodimer. Monomeric at pH 5.0 and dimeric at either pH 6.5 or 8.0. The protein aggregates increasingly strongly with increasing pH.

Its subcellular location is the mitochondrion. In terms of biological role, endogenous low-affinity ATPase inhibitor, which inhibits specifically the reverse ATPase reaction of mitochondrial F(1)F(0)-type ATP synthase. Found to stabilize, together with STF2, a complex of intrinsic ATPase inhibitor INH1 and proton-translocating ATPase in mitochondrial membranes. Binds directly to purified F1-ATPase. The protein is F(1)-ATPase inhibitor STF1, mitochondrial (STF1) of Saccharomyces cerevisiae (strain ATCC 204508 / S288c) (Baker's yeast).